Consider the following 80-residue polypeptide: MAKSATIVTLFFAALVFFAALEAPMVVEAQKLCERPSGTWSGVCGNSNACKNQCINLEKARHGSCNYVFPAHKCICYFPC.

The signal sequence occupies residues Met1 to Ala29. Gln30 carries the pyrrolidone carboxylic acid modification. 4 cysteine pairs are disulfide-bonded: Cys33/Cys80, Cys44/Cys65, Cys50/Cys74, and Cys54/Cys76.

The protein belongs to the DEFL family. As to quaternary structure, forms oligomers in its native state. As to expression, expressed predominantly in siliques and dry seeds.

It is found in the secreted. Confers broad-spectrum resistance to pathogens. Possesses antifungal activity sensitive to inorganic cations in vitro. This is Defensin-like protein 13 (PDF1.1) from Arabidopsis thaliana (Mouse-ear cress).